A 747-amino-acid polypeptide reads, in one-letter code: Elongation factor G, mitochondrial (747 aa).

The N-terminal 16 residues, 1 to 16 (MSLIMRVLNGNLSLRL), are a transit peptide targeting the mitochondrion. The tr-type G domain maps to 42 to 319 (ERIRNIGISA…AIIDYLPNPG (278 aa)). GTP contacts are provided by residues 51-58 (AHIDSGKT), 118-122 (DTPGH), and 172-175 (NKLD).

This sequence belongs to the TRAFAC class translation factor GTPase superfamily. Classic translation factor GTPase family. EF-G/EF-2 subfamily.

It localises to the mitochondrion. It functions in the pathway protein biosynthesis; polypeptide chain elongation. Its function is as follows. Mitochondrial GTPase that catalyzes the GTP-dependent ribosomal translocation step during translation elongation. During this step, the ribosome changes from the pre-translocational (PRE) to the post-translocational (POST) state as the newly formed A-site-bound peptidyl-tRNA and P-site-bound deacylated tRNA move to the P and E sites, respectively. Catalyzes the coordinated movement of the two tRNA molecules, the mRNA and conformational changes in the ribosome. Essential during development as it acts as a retrograde signal from mitochondria to the nucleus to slow down cell proliferation if mitochondrial energy output is low. The polypeptide is Elongation factor G, mitochondrial (Drosophila grimshawi (Hawaiian fruit fly)).